The primary structure comprises 106 residues: Iron-sulfur cluster assembly protein CyaY (106 aa).

It belongs to the frataxin family.

Involved in iron-sulfur (Fe-S) cluster assembly. May act as a regulator of Fe-S biogenesis. In Escherichia coli O127:H6 (strain E2348/69 / EPEC), this protein is Iron-sulfur cluster assembly protein CyaY.